An 890-amino-acid polypeptide reads, in one-letter code: Translation initiation factor IF-2 (890 aa).

The segment at 45-304 (LIDHLNQKNS…LQQGFQKPAQ (260 aa)) is disordered. Positions 67–81 (STLNIPGTGGKSKSV) are enriched in polar residues. The segment covering 92 to 217 (VKRDPQEAER…RMAEENKWTD (126 aa)) has biased composition (basic and acidic residues). Basic residues predominate over residues 252-266 (GRGRNAKAARPKKGN). A compositionally biased stretch (basic and acidic residues) spans 267–280 (KHAESKADREEARA). Residues 389 to 558 (PRAPVVTIMG…LLQAEVLELK (170 aa)) enclose the tr-type G domain. Residues 398–405 (GHVDHGKT) form a G1 region. A GTP-binding site is contributed by 398 to 405 (GHVDHGKT). A G2 region spans residues 423–427 (GITQH). Positions 444–447 (DTPG) are G3. Residues 444 to 448 (DTPGH) and 498 to 501 (NKID) contribute to the GTP site. A G4 region spans residues 498-501 (NKID). The G5 stretch occupies residues 534-536 (SAK). Position 808 is an N6-acetyllysine (Lys808).

This sequence belongs to the TRAFAC class translation factor GTPase superfamily. Classic translation factor GTPase family. IF-2 subfamily.

Its subcellular location is the cytoplasm. Functionally, one of the essential components for the initiation of protein synthesis. Protects formylmethionyl-tRNA from spontaneous hydrolysis and promotes its binding to the 30S ribosomal subunits. Also involved in the hydrolysis of GTP during the formation of the 70S ribosomal complex. In Shigella sonnei (strain Ss046), this protein is Translation initiation factor IF-2.